An 87-amino-acid polypeptide reads, in one-letter code: Small ribosomal subunit protein uS15 (87 aa).

Belongs to the universal ribosomal protein uS15 family. As to quaternary structure, part of the 30S ribosomal subunit. Forms a bridge to the 50S subunit in the 70S ribosome, contacting the 23S rRNA.

In terms of biological role, one of the primary rRNA binding proteins, it binds directly to 16S rRNA where it helps nucleate assembly of the platform of the 30S subunit by binding and bridging several RNA helices of the 16S rRNA. Forms an intersubunit bridge (bridge B4) with the 23S rRNA of the 50S subunit in the ribosome. In Clostridium perfringens (strain ATCC 13124 / DSM 756 / JCM 1290 / NCIMB 6125 / NCTC 8237 / Type A), this protein is Small ribosomal subunit protein uS15.